The sequence spans 249 residues: Ribosomal RNA small subunit methyltransferase G (249 aa).

Residues glycine 88, phenylalanine 93, 111-113 (DAT), 139-140 (AE), and arginine 158 each bind S-adenosyl-L-methionine. A disulfide bridge links cysteine 164 with cysteine 249. The segment at 245-246 (RH) is RNA binding.

This sequence belongs to the methyltransferase superfamily. RNA methyltransferase RsmG family.

The protein resides in the cytoplasm. The enzyme catalyses guanosine(527) in 16S rRNA + S-adenosyl-L-methionine = N(7)-methylguanosine(527) in 16S rRNA + S-adenosyl-L-homocysteine. In terms of biological role, specifically methylates the N7 position of guanine in position 527 of 16S rRNA. Shows a marked preference for deproteinized 16S rRNA as substrate and is completely inactive with native 30S subunits as substrate. This is Ribosomal RNA small subunit methyltransferase G from Thermus thermophilus (strain ATCC 27634 / DSM 579 / HB8).